The chain runs to 337 residues: MTAGGQAEAEGAGGEPGAARLPSRVARLLSALFYGTCSFLIVLVNKALLTTYGFPSPIFLGIGQMAATIMILYVSKLNKIIHFPDFDKKIPVKLFPLPLLYVGNHISGLSSTSKLSLPMFTVLRKFTIPLTLLLETIILGKQYSLNIILSVFAIILGAFIAAGSDLAFNLEGYIFVFLNDIFTAANGVYTKQKMDPKELGKYGVLFYNACFMIIPTLIISVSTGDLQQATEFNQWKNVVFILQFLLSCFLGFLLMYSTVLCSYYNSALTTAVVGAIKNVSVAYIGILIGGDYIFSLLNFVGLNICMAGGLRYSFLTLSSQLKPKPVGEENICLDLKS.

The Cytoplasmic portion of the chain corresponds to 1-27; sequence MTAGGQAEAEGAGGEPGAARLPSRVAR. Residues 28 to 48 form a helical membrane-spanning segment; it reads LLSALFYGTCSFLIVLVNKAL. At 49–53 the chain is on the extracellular side; sequence LTTYG. Residues 54–74 form a helical membrane-spanning segment; the sequence is FPSPIFLGIGQMAATIMILYV. At 75–146 the chain is on the cytoplasmic side; it reads SKLNKIIHFP…IILGKQYSLN (72 aa). The next 2 membrane-spanning stretches (helical) occupy residues 147–167 and 168–188; these read IILSVFAIILGAFIAAGSDLA and FNLEGYIFVFLNDIFTAANGV. Residues 189–201 are Cytoplasmic-facing; the sequence is YTKQKMDPKELGK. A helical membrane pass occupies residues 202 to 222; it reads YGVLFYNACFMIIPTLIISVS. Topologically, residues 223–237 are extracellular; that stretch reads TGDLQQATEFNQWKN. A helical transmembrane segment spans residues 238 to 258; it reads VVFILQFLLSCFLGFLLMYST. Residues 259–265 lie on the Cytoplasmic side of the membrane; that stretch reads VLCSYYN. Residues 266-288 traverse the membrane as a helical segment; that stretch reads SALTTAVVGAIKNVSVAYIGILI. Residues 289-292 are Extracellular-facing; that stretch reads GGDY. The helical transmembrane segment at 293–315 threads the bilayer; that stretch reads IFSLLNFVGLNICMAGGLRYSFL. Residues 316-337 are Cytoplasmic-facing; the sequence is TLSSQLKPKPVGEENICLDLKS.

The protein belongs to the TPT transporter family. SLC35D subfamily. In terms of tissue distribution, highly expressed in heart, kidney, small intestine, placenta, lung and peripheral blood leukocyte. Weakly expressed in skeletal muscle and spleen. Not expressed in brain, colon and thymus.

The protein localises to the golgi apparatus membrane. It catalyses the reaction UMP(out) + UDP-N-acetyl-alpha-D-glucosamine(in) = UMP(in) + UDP-N-acetyl-alpha-D-glucosamine(out). The catalysed reaction is UMP(out) + UDP-alpha-D-glucose(in) = UMP(in) + UDP-alpha-D-glucose(out). In terms of biological role, nucleotide sugar antiporter transporting UDP-N-acetylglucosamine (UDP-GlcNAc) and UDP-glucose (UDP-Glc) from the cytosol into the lumen of the Golgi in exchange of UMP. By supplying UDP-N-acetylglucosamine, a donor substrate to heparan sulfate synthases, probably takes part in the synthesis of these glycoconjugates. In Homo sapiens (Human), this protein is Nucleotide sugar transporter SLC35D2.